A 385-amino-acid chain; its full sequence is Acetylornithine aminotransferase (385 aa).

Pyridoxal 5'-phosphate is bound by residues 95–96 (GA) and phenylalanine 122. Arginine 125 provides a ligand contact to N(2)-acetyl-L-ornithine. Position 208–211 (208–211 (DEIQ)) interacts with pyridoxal 5'-phosphate. Lysine 237 carries the post-translational modification N6-(pyridoxal phosphate)lysine. Threonine 265 contacts N(2)-acetyl-L-ornithine. Threonine 266 provides a ligand contact to pyridoxal 5'-phosphate.

Belongs to the class-III pyridoxal-phosphate-dependent aminotransferase family. ArgD subfamily. In terms of assembly, homodimer. The cofactor is pyridoxal 5'-phosphate.

It is found in the cytoplasm. The enzyme catalyses N(2)-acetyl-L-ornithine + 2-oxoglutarate = N-acetyl-L-glutamate 5-semialdehyde + L-glutamate. It participates in amino-acid biosynthesis; L-arginine biosynthesis; N(2)-acetyl-L-ornithine from L-glutamate: step 4/4. In Bacillus subtilis (strain 168), this protein is Acetylornithine aminotransferase.